Reading from the N-terminus, the 468-residue chain is Probable citrate synthase, mitochondrial (468 aa).

Active-site residues include His303, His349, and Asp404.

Belongs to the citrate synthase family. Homodimer.

The protein localises to the mitochondrion matrix. It carries out the reaction oxaloacetate + acetyl-CoA + H2O = citrate + CoA + H(+). It participates in carbohydrate metabolism; tricarboxylic acid cycle; isocitrate from oxaloacetate: step 1/2. The chain is Probable citrate synthase, mitochondrial (cts-1) from Caenorhabditis briggsae.